The following is a 402-amino-acid chain: Acetylornithine aminotransferase (402 aa).

Pyridoxal 5'-phosphate contacts are provided by residues 106-107 (GA) and Phe-132. Arg-135 contributes to the N(2)-acetyl-L-ornithine binding site. Residue 217 to 220 (DEVQ) coordinates pyridoxal 5'-phosphate. N6-(pyridoxal phosphate)lysine is present on Lys-247. Position 275 (Thr-275) interacts with N(2)-acetyl-L-ornithine. Thr-276 provides a ligand contact to pyridoxal 5'-phosphate.

It belongs to the class-III pyridoxal-phosphate-dependent aminotransferase family. ArgD subfamily. As to quaternary structure, homodimer. It depends on pyridoxal 5'-phosphate as a cofactor.

It is found in the cytoplasm. The catalysed reaction is N(2)-acetyl-L-ornithine + 2-oxoglutarate = N-acetyl-L-glutamate 5-semialdehyde + L-glutamate. It participates in amino-acid biosynthesis; L-arginine biosynthesis; N(2)-acetyl-L-ornithine from L-glutamate: step 4/4. The chain is Acetylornithine aminotransferase from Streptomyces coelicolor (strain ATCC BAA-471 / A3(2) / M145).